A 290-amino-acid polypeptide reads, in one-letter code: 33 kDa chaperonin (290 aa).

Disulfide bonds link Cys-235–Cys-237 and Cys-268–Cys-271.

It belongs to the HSP33 family. In terms of processing, under oxidizing conditions two disulfide bonds are formed involving the reactive cysteines. Under reducing conditions zinc is bound to the reactive cysteines and the protein is inactive.

It is found in the cytoplasm. Functionally, redox regulated molecular chaperone. Protects both thermally unfolding and oxidatively damaged proteins from irreversible aggregation. Plays an important role in the bacterial defense system toward oxidative stress. This chain is 33 kDa chaperonin, found in Streptococcus equi subsp. zooepidemicus (strain MGCS10565).